The chain runs to 475 residues: Ankyrin repeat, SAM and basic leucine zipper domain-containing protein 1 (475 aa).

A disordered region spans residues 1–25; it reads MAAGALRGLPVAGGGESSESEDDGW. 3 positions are modified to phosphoserine: Ser17, Ser18, and Ser20. ANK repeat units follow at residues 45–74, 78–107, 110–144, 148–177, 181–210, and 214–243; these read EKKE…SVDS, YGWT…NASF, DKQS…DPNV, RLMT…EVNT, NGYT…NKML, and DGKM…PLEG. One can recognise an SAM domain in the interval 272 to 334; the sequence is SYTAFGDLEV…KILAALKELQ (63 aa).

Interacts with DDX4, PIWIL1, RANBP9 and TDRD1.

The protein localises to the cytoplasm. In terms of biological role, plays a central role during spermatogenesis by repressing transposable elements and preventing their mobilization, which is essential for the germline integrity. Acts via the piRNA metabolic process, which mediates the repression of transposable elements during meiosis by forming complexes composed of piRNAs and Piwi proteins and governs the methylation and subsequent repression of transposons. Its association with pi-bodies suggests a participation in the primary piRNAs metabolic process. Required prior to the pachytene stage to facilitate the production of multiple types of piRNAs, including those associated with repeats involved in the regulation of retrotransposons. May act by mediating protein-protein interactions during germ cell maturation. The protein is Ankyrin repeat, SAM and basic leucine zipper domain-containing protein 1 (ASZ1) of Pongo abelii (Sumatran orangutan).